A 652-amino-acid polypeptide reads, in one-letter code: Anaphase-promoting complex subunit 4 (652 aa).

As to quaternary structure, the APC/C is composed of at least 13 subunits that stay tightly associated throughout the cell cycle: APC1, APC2, APC4, APC5, APC9, APC11, CDC16, CDC23, CDC26, CDC27, DOC1, MND2 and SWM1.

Its subcellular location is the cytoplasm. It is found in the nucleus. It functions in the pathway protein modification; protein ubiquitination. Functionally, component of the anaphase promoting complex/cyclosome (APC/C), a cell cycle-regulated E3 ubiquitin-protein ligase complex that controls progression through mitosis and the G1 phase of the cell cycle. The APC/C is thought to confer substrate specificity and, in the presence of ubiquitin-conjugating E2 enzymes, it catalyzes the formation of protein-ubiquitin conjugates that are subsequently degraded by the 26S proteasome. In early mitosis, the APC/C is activated by CDC20 and targets securin PDS1, the B-type cyclin CLB5, and other anaphase inhibitory proteins for proteolysis, thereby triggering the separation of sister chromatids at the metaphase-to-anaphase transition. In late mitosis and in G1, degradation of CLB5 allows activation of the APC/C by CDH1, which is needed to destroy CDC20 and the B-type cyclin CLB2 to allow exit from mitosis and creating the low CDK state necessary for cytokinesis and for reforming prereplicative complexes in G1 prior to another round of replication. This chain is Anaphase-promoting complex subunit 4 (APC4), found in Saccharomyces cerevisiae (strain ATCC 204508 / S288c) (Baker's yeast).